A 349-amino-acid polypeptide reads, in one-letter code: Soluble TNF receptor II (349 aa).

Residues 1–19 (MKSVLYSYILFLSCIIING) form the signal peptide. 2 TNFR-Cys repeats span residues 31–65 (KCKD…NTQC) and 67–108 (PCGS…NRIC). 6 cysteine pairs are disulfide-bonded: cysteine 32–cysteine 43, cysteine 44–cysteine 57, cysteine 47–cysteine 65, cysteine 68–cysteine 83, cysteine 86–cysteine 100, and cysteine 90–cysteine 108. Asparagine 101, asparagine 189, and asparagine 248 each carry an N-linked (GlcNAc...) asparagine; by host glycan.

The protein belongs to the orthopoxvirus OPG002 family.

Inhibits host immune defense by binding to host TNF and various chemokines in the extracellular space. Binds host CC chemokines (beta chemokines) and CXC chemokines (alpha chemokines). The polypeptide is Soluble TNF receptor II (OPG002) (Camelus).